Consider the following 342-residue polypeptide: Galactose mutarotase (342 aa).

The residue at position 2 (Ala2) is an N-acetylalanine. Phosphoserine is present on Ser14. Beta-D-galactose contacts are provided by residues 81-82 (NR) and His107. Ser124 bears the Phosphoserine mark. His176 (proton donor) is an active-site residue. Residues 176-178 (HSY), Asp243, Gln279, and Glu307 contribute to the beta-D-galactose site. Glu307 acts as the Proton acceptor in catalysis.

It belongs to the aldose epimerase family. As to quaternary structure, monomer.

The protein localises to the cytoplasm. The enzyme catalyses alpha-D-galactose = beta-D-galactose. It catalyses the reaction alpha-D-glucose = beta-D-glucose. Its pathway is carbohydrate metabolism; hexose metabolism. The protein operates within carbohydrate metabolism; galactose metabolism. Functionally, mutarotase that catalyzes the interconversion of beta-D-galactose and alpha-D-galactose during galactose metabolism. Beta-D-galactose is metabolized in the liver into glucose 1-phosphate, the primary metabolic fuel, by the action of four enzymes that constitute the Leloir pathway: GALM, GALK1 (galactokinase), GALT (galactose-1-phosphate uridylyltransferase) and GALE (UDP-galactose-4'-epimerase). Involved in the maintenance of the equilibrium between the beta- and alpha-anomers of galactose, therefore ensuring a sufficient supply of the alpha-anomer for GALK1. Also active on D-glucose although shows a preference for galactose over glucose. The sequence is that of Galactose mutarotase from Homo sapiens (Human).